The primary structure comprises 390 residues: 1-deoxy-D-xylulose 5-phosphate reductoisomerase (390 aa).

The NADPH site is built by T10, G11, S12, V13, G38, N40, and N123. K124 contributes to the 1-deoxy-D-xylulose 5-phosphate binding site. E125 is an NADPH binding site. Residue D149 participates in Mn(2+) binding. 1-deoxy-D-xylulose 5-phosphate-binding residues include S150, E151, S175, and H198. E151 lines the Mn(2+) pocket. G204 contacts NADPH. 1-deoxy-D-xylulose 5-phosphate-binding residues include S211, N216, K217, and E220. E220 provides a ligand contact to Mn(2+).

Belongs to the DXR family. The cofactor is Mg(2+). Requires Mn(2+) as cofactor.

It carries out the reaction 2-C-methyl-D-erythritol 4-phosphate + NADP(+) = 1-deoxy-D-xylulose 5-phosphate + NADPH + H(+). Its pathway is isoprenoid biosynthesis; isopentenyl diphosphate biosynthesis via DXP pathway; isopentenyl diphosphate from 1-deoxy-D-xylulose 5-phosphate: step 1/6. In terms of biological role, catalyzes the NADPH-dependent rearrangement and reduction of 1-deoxy-D-xylulose-5-phosphate (DXP) to 2-C-methyl-D-erythritol 4-phosphate (MEP). The protein is 1-deoxy-D-xylulose 5-phosphate reductoisomerase of Paracoccus denitrificans (strain Pd 1222).